The chain runs to 282 residues: MSDNIISFDHVTFTYPDSPRPALSDLSFAIERGSWTALIGHNGSGKSTVSKLINGLLAPDDLDKSSITVDGVKLGADTVWEVREKVGIVFQNPDNQFVGATVSDDVAFGLENRAVPRPEMLKIVAQAVADVGMADYADSEPSNLSGGQKQRVAIAGILAVKPQVIILDESTSMLDPEGKEQILDLVRKIKEDNNLTVISITHDLEEAAGADQVLVLDDGQLLDQGKPEEIFPKVEMLKRIGLDIPFVYRLKQLLKERGIVLPDEIDDDEKLVQSLWQLNSKM.

In terms of domain architecture, ABC transporter spans 6–243; the sequence is ISFDHVTFTY…VEMLKRIGLD (238 aa). 40–47 is an ATP binding site; sequence GHNGSGKS.

It belongs to the ABC transporter superfamily. Energy-coupling factor EcfA family. Forms a stable energy-coupling factor (ECF) transporter complex composed of 2 membrane-embedded substrate-binding proteins (S component), 2 ATP-binding proteins (A component) and 2 transmembrane proteins (T component).

Its subcellular location is the cell membrane. Its function is as follows. ATP-binding (A) component of a common energy-coupling factor (ECF) ABC-transporter complex. Unlike classic ABC transporters this ECF transporter provides the energy necessary to transport a number of different substrates. The polypeptide is Energy-coupling factor transporter ATP-binding protein EcfA1 (Lactobacillus delbrueckii subsp. bulgaricus (strain ATCC 11842 / DSM 20081 / BCRC 10696 / JCM 1002 / NBRC 13953 / NCIMB 11778 / NCTC 12712 / WDCM 00102 / Lb 14)).